The sequence spans 701 residues: Cytosolic endo-beta-N-acetylglucosaminidase 2 (701 aa).

This sequence belongs to the glycosyl hydrolase 85 family.

Its subcellular location is the cytoplasm. The protein resides in the cytosol. It carries out the reaction an N(4)-(oligosaccharide-(1-&gt;3)-[oligosaccharide-(1-&gt;6)]-beta-D-Man-(1-&gt;4)-beta-D-GlcNAc-(1-&gt;4)-alpha-D-GlcNAc)-L-asparaginyl-[protein] + H2O = an oligosaccharide-(1-&gt;3)-[oligosaccharide-(1-&gt;6)]-beta-D-Man-(1-&gt;4)-D-GlcNAc + N(4)-(N-acetyl-beta-D-glucosaminyl)-L-asparaginyl-[protein]. In terms of biological role, endoglycosidase that releases N-glycans from glycoproteins by cleaving the beta-1,4-glycosidic bond in the N,N'-diacetylchitobiose core. Involved in the production of high-mannose type N-glycans during plant development and fruit maturation. The polypeptide is Cytosolic endo-beta-N-acetylglucosaminidase 2 (Arabidopsis thaliana (Mouse-ear cress)).